The primary structure comprises 796 residues: Lon protease (796 aa).

Residues leucine 19 to proline 213 form the Lon N-terminal domain. Glycine 376–threonine 383 contributes to the ATP binding site. Residues glutamate 612–asparagine 793 enclose the Lon proteolytic domain. Residues serine 699 and lysine 742 contribute to the active site.

Belongs to the peptidase S16 family. As to quaternary structure, homohexamer. Organized in a ring with a central cavity.

The protein resides in the cytoplasm. It catalyses the reaction Hydrolysis of proteins in presence of ATP.. In terms of biological role, ATP-dependent serine protease that mediates the selective degradation of mutant and abnormal proteins as well as certain short-lived regulatory proteins. Required for cellular homeostasis and for survival from DNA damage and developmental changes induced by stress. Degrades polypeptides processively to yield small peptide fragments that are 5 to 10 amino acids long. Binds to DNA in a double-stranded, site-specific manner. In Mycoplasma mycoides subsp. mycoides SC (strain CCUG 32753 / NCTC 10114 / PG1), this protein is Lon protease.